Reading from the N-terminus, the 418-residue chain is Beta-arrestin-1 (418 aa).

The interval 1–163 (MGDKGTRVFK…LEEKIHKRNS (163 aa)) is interaction with SRC. An interaction with CHRM2 region spans residues 45–86 (PEYLKERRVYVTLTCAFRYGREDLDVLGLTFRKDLFVANVQS). Position 47 is a phosphotyrosine (Y47). Positions 250, 255, 324, and 326 each coordinate 1D-myo-inositol hexakisphosphate. Residues 318–418 (IVSYKVKVKL…GTGSPRLNDR (101 aa)) form an interaction with TRAF6 region. The interval 353 to 375 (HPKPKEEPPHREVPEHETPVDTN) is disordered. Residues 355–371 (KPKEEPPHREVPEHETP) are compositionally biased toward basic and acidic residues. The short motif at 385–395 (DIVFEDFARQR) is the [DE]-X(1,2)-F-X-X-[FL]-X-X-X-R motif element. Residues 397–418 (KGMKDDKEEEEDGTGSPRLNDR) are disordered. S412 is modified (phosphoserine; by GRK5).

Belongs to the arrestin family. As to quaternary structure, monomer. Homodimer. Homooligomer; the self-association is mediated by InsP6-binding. Heterooligomer with ARRB2; the association is mediated by InsP6-binding. Interacts with ADRB2 (phosphorylated). Interacts with CHRM2 (phosphorylated). Interacts with LHCGR. Interacts with CYTH2 and CASR. Interacts with AP2B1 (dephosphorylated at 'Tyr-737'); phosphorylation of AP2B1 at 'Tyr-737' disrupts the interaction. Interacts (dephosphorylated at Ser-412) with CLTC. Interacts with CCR2 and GRK2. Interacts with CRR5. Interacts with PTAFR (phosphorylated on serine residues). Interacts with CLTC and MAP2K3. Interacts with CREB1. Interacts with TRAF6. Interacts with IGF1R and MDM2. Interacts with C5AR1. Interacts with PDE4D. Interacts with SRC (via the SH3 domain and the protein kinase domain); the interaction is independent of the phosphorylation state of SRC C-terminus. Interacts with TACR1. Interacts with RAF1. Interacts with CHUK, IKBKB and MAP3K14. Interacts with DVL1; the interaction is enhanced by phosphorylation of DVL1. Interacts with DVL2; the interaction is enhanced by phosphorylation of DVL2. Interacts with IGF1R. Associates with MAP kinase p38. Part of a MAPK signaling complex consisting of TACR1, ARRB1, SRC, MAPK1 (activated) and MAPK3 (activated). Part of a MAPK signaling complex consisting of F2RL1, ARRB1, RAF1, MAPK1 (activated) and MAPK3 (activated). Interacts with GPR143. Interacts with MAP2K4/MKK4. Interacts with HCK and CXCR1 (phosphorylated). Interacts with ACKR3 and ACKR4. Interacts with ARRDC1; the interaction is direct. Interacts with GPR61, GPR62 and GPR135. In terms of processing, constitutively phosphorylated at Ser-412 in the cytoplasm. At the plasma membrane, is rapidly dephosphorylated, a process that is required for clathrin binding and ADRB2 endocytosis but not for ADRB2 binding and desensitization. Once internalized, is rephosphorylated. The ubiquitination status appears to regulate the formation and trafficking of beta-arrestin-GPCR complexes and signaling. Ubiquitination appears to occur GPCR-specific. Ubiquitinated by MDM2; the ubiquitination is required for rapid internalization of ADRB2. Deubiquitinated by USP33; the deubiquitination leads to a dissociation of the beta-arrestin-GPCR complex. Stimulation of a class A GPCR, such as ADRB2, induces transient ubiquitination and subsequently promotes association with USP33. Beta-arrestin 1A is found in cortex, cerebellum, striatum, pineal gland, retina and heart. Beta-arrestin 1B is found in spleen, lung, pituitary and kidney.

Its subcellular location is the cytoplasm. It localises to the nucleus. It is found in the cell membrane. The protein localises to the membrane. The protein resides in the clathrin-coated pit. Its subcellular location is the cell projection. It localises to the pseudopodium. It is found in the cytoplasmic vesicle. Functionally, functions in regulating agonist-mediated G-protein coupled receptor (GPCR) signaling by mediating both receptor desensitization and resensitization processes. During homologous desensitization, beta-arrestins bind to the GPRK-phosphorylated receptor and sterically preclude its coupling to the cognate G-protein; the binding appears to require additional receptor determinants exposed only in the active receptor conformation. The beta-arrestins target many receptors for internalization by acting as endocytic adapters (CLASPs, clathrin-associated sorting proteins) and recruiting the GPRCs to the adapter protein 2 complex 2 (AP-2) in clathrin-coated pits (CCPs). However, the extent of beta-arrestin involvement appears to vary significantly depending on the receptor, agonist and cell type. Internalized arrestin-receptor complexes traffic to intracellular endosomes, where they remain uncoupled from G-proteins. Two different modes of arrestin-mediated internalization occur. Class A receptors, like ADRB2, OPRM1, ENDRA, D1AR and ADRA1B dissociate from beta-arrestin at or near the plasma membrane and undergo rapid recycling. Class B receptors, like AVPR2, AGTR1, NTSR1, TRHR and TACR1 internalize as a complex with arrestin and traffic with it to endosomal vesicles, presumably as desensitized receptors, for extended periods of time. Receptor resensitization then requires that receptor-bound arrestin is removed so that the receptor can be dephosphorylated and returned to the plasma membrane. Involved in internalization of P2RY4 and UTP-stimulated internalization of P2RY2. Involved in phosphorylation-dependent internalization of OPRD1 ands subsequent recycling. Involved in the degradation of cAMP by recruiting cAMP phosphodiesterases to ligand-activated receptors. Beta-arrestins function as multivalent adapter proteins that can switch the GPCR from a G-protein signaling mode that transmits short-lived signals from the plasma membrane via small molecule second messengers and ion channels to a beta-arrestin signaling mode that transmits a distinct set of signals that are initiated as the receptor internalizes and transits the intracellular compartment. Acts as a signaling scaffold for MAPK pathways such as MAPK1/3 (ERK1/2). ERK1/2 activated by the beta-arrestin scaffold is largely excluded from the nucleus and confined to cytoplasmic locations such as endocytic vesicles, also called beta-arrestin signalosomes. Recruits c-Src/SRC to ADRB2 resulting in ERK activation. GPCRs for which the beta-arrestin-mediated signaling relies on both ARRB1 and ARRB2 (codependent regulation) include ADRB2, F2RL1 and PTH1R. For some GPCRs the beta-arrestin-mediated signaling relies on either ARRB1 or ARRB2 and is inhibited by the other respective beta-arrestin form (reciprocal regulation). Inhibits ERK1/2 signaling in AGTR1- and AVPR2-mediated activation (reciprocal regulation). Is required for SP-stimulated endocytosis of NK1R and recruits c-Src/SRC to internalized NK1R resulting in ERK1/2 activation, which is required for the antiapoptotic effects of SP. Is involved in proteinase-activated F2RL1-mediated ERK activity. Acts as a signaling scaffold for the AKT1 pathway. Is involved in alpha-thrombin-stimulated AKT1 signaling. Is involved in IGF1-stimulated AKT1 signaling leading to increased protection from apoptosis. Involved in activation of the p38 MAPK signaling pathway and in actin bundle formation. Involved in F2RL1-mediated cytoskeletal rearrangement and chemotaxis. Involved in AGTR1-mediated stress fiber formation by acting together with GNAQ to activate RHOA. Appears to function as signaling scaffold involved in regulation of MIP-1-beta-stimulated CCR5-dependent chemotaxis. Involved in attenuation of NF-kappa-B-dependent transcription in response to GPCR or cytokine stimulation by interacting with and stabilizing CHUK. May serve as nuclear messenger for GPCRs. Involved in OPRD1-stimulated transcriptional regulation by translocating to CDKN1B and FOS promoter regions and recruiting EP300 resulting in acetylation of histone H4. Involved in regulation of LEF1 transcriptional activity via interaction with DVL1 and/or DVL2 Also involved in regulation of receptors other than GPCRs. Involved in Toll-like receptor and IL-1 receptor signaling through the interaction with TRAF6 which prevents TRAF6 autoubiquitination and oligomerization required for activation of NF-kappa-B and JUN. Involved in IL8-mediated granule release in neutrophils. Binds phosphoinositides. Binds inositol hexakisphosphate (InsP6). Required for atypical chemokine receptor ACKR2-induced RAC1-LIMK1-PAK1-dependent phosphorylation of cofilin (CFL1) and for the up-regulation of ACKR2 from endosomal compartment to cell membrane, increasing its efficiency in chemokine uptake and degradation. Involved in the internalization of the atypical chemokine receptor ACKR3. Negatively regulates the NOTCH signaling pathway by mediating the ubiquitination and degradation of NOTCH1 by ITCH. Participates in the recruitment of the ubiquitin-protein ligase to the receptor. The sequence is that of Beta-arrestin-1 (ARRB1) from Bos taurus (Bovine).